The chain runs to 152 residues: Large ribosomal subunit protein eL14 (152 aa).

Belongs to the eukaryotic ribosomal protein eL14 family.

The sequence is that of Large ribosomal subunit protein eL14 (RPL14) from Lumbricus rubellus (Humus earthworm).